The chain runs to 83 residues: Small ribosomal subunit protein eS21 (83 aa).

Belongs to the eukaryotic ribosomal protein eS21 family. As to quaternary structure, component of the 40S small ribosomal subunit.

It localises to the cytoplasm. Its subcellular location is the cytosol. The protein resides in the rough endoplasmic reticulum. Functionally, component of the small ribosomal subunit. The ribosome is a large ribonucleoprotein complex responsible for the synthesis of proteins in the cell. This is Small ribosomal subunit protein eS21 (rps21) from Xenopus tropicalis (Western clawed frog).